Reading from the N-terminus, the 202-residue chain is Large ribosomal subunit protein uL4 (202 aa).

Residues 40–71 (GRQGSKAQKTRSQVSGGGKKPWRQKGSGRARA) are disordered. The segment covering 44-53 (SKAQKTRSQV) has biased composition (polar residues).

Belongs to the universal ribosomal protein uL4 family. As to quaternary structure, part of the 50S ribosomal subunit.

One of the primary rRNA binding proteins, this protein initially binds near the 5'-end of the 23S rRNA. It is important during the early stages of 50S assembly. It makes multiple contacts with different domains of the 23S rRNA in the assembled 50S subunit and ribosome. In terms of biological role, forms part of the polypeptide exit tunnel. The chain is Large ribosomal subunit protein uL4 from Hahella chejuensis (strain KCTC 2396).